The sequence spans 367 residues: Cycloaraneosene synthase sdnA (367 aa).

The first 24 residues, 1-24 (MSLYGLFTLATSYLPSVGGGAALA), serve as a signal peptide directing secretion. Mg(2+)-binding residues include Asp-115, Asn-260, and Ser-264. Positions 115 to 119 (DDQFD) match the DDXXD motif motif. The N-linked (GlcNAc...) asparagine glycan is linked to Asn-276.

It belongs to the terpene synthase family. The cofactor is Mg(2+).

The enzyme catalyses (2E,6E,10E)-geranylgeranyl diphosphate = cycloaraneosene + diphosphate. The protein operates within antibiotic biosynthesis. Its function is as follows. Cycloaraneosene synthase; part of the gene cluster that mediates the biosynthesis of sordarin and hypoxysordarin, glycoside antibiotics with a unique tetracyclic diterpene aglycone structure. First, the geranylgeranyl diphosphate synthase sdnC constructs GGDP from farnesyl diphosphate and isopentenyl diphosphate. The diterpene cyclase sdnA then catalyzes the cyclization of GGDP to afford cycloaraneosene. Cycloaraneosene is then hydroxylated four times by the putative cytochrome P450 monooxygenases sdnB, sdnE, sdnF and sdnH to give a hydroxylated cycloaraneosene derivative such as cycloaraneosene-8,9,13,19-tetraol. Although the order of the hydroxylations is unclear, at least C8, C9 and C13 of the cycloaraneosene skeleton are hydroxylated before the sordaricin formation. Dehydration of the 13-hydroxy group of the hydroxylated cycloaraneosene derivative might be catalyzed by an unassigned hypothetical protein such as sdnG and sdnP to construct the cyclopentadiene moiety. The FAD-dependent oxidoreductase sdnN is proposed to catalyze the oxidation at C9 of the hydroxylated cycloaraneosene derivative and also catalyze the Baeyer-Villiger oxidation to give the lactone intermediate. The presumed lactone intermediate would be hydrolyzed to give an acrolein moiety and a carboxylate moiety. Then, [4+2]cycloaddition would occur between the acrolein moiety and the cyclopentadiene moiety to give sordaricin. SdnN might also be involved in the [4+2]cycloaddition after the hypothesized oxidation to accommodate the oxidized product and prompt the [4+2]cycloaddition. GDP-6-deoxy-D-altrose may be biosynthesized from GDP-D-mannose by the putative GDP-mannose-4,6-dehydratase sdnI and the short-chain dehydrogenase sdnK. The glycosyltransferase sdnJ catalyzes the attachment of 6-deoxy-D-altrose onto the 19-hydroxy group of sordaricin to give 4'-O-demethylsordarin. The methyltransferase sdnD would complete the biosynthesis of sordarin. Sordarin can be further modified into hypoxysordarin. The unique acyl chain at the 3'-hydroxy group of hypoxysordarin would be constructed by an iterative type I PKS sdnO and the trans-acting polyketide methyltransferase sdnL. SdnL would be responsible for the introduction of an alpha-methyl group of the polyketide chain. Alternatively, the beta-lactamase-like protein sdnR might be responsible for the cleavage and transfer of the polyketide chain from the PKS sdnO to sordarin. Two putative cytochrome P450 monooxygenases, sdnQ and sdnT, might catalyze the epoxidations of the polyketide chain to complete the biosynthesis of hypoxysordarin. Transcriptional regulators sdnM and sdnS are presumably encoded for the transcriptional regulation of the expression of the sdn gene cluster. This Sordaria araneosa (Pleurage araneosa) protein is Cycloaraneosene synthase sdnA.